The primary structure comprises 298 residues: MMLSEETSAVRPQKQTRFNGAKLVWMLKGSPLTVTSAVIIVLMLLMMIFSPWLATHDPNAIDLTARLLPPSAAHWFGTDEVGRDLFSRVLVGSQQSILAGLVVVAIAGMIGSLLGCLSGVLGGRADAIIMRIMDIMLSIPSLVLTMALAAALGPSLFNAMLAIAIVRIPFYVRLARGQALVVRQYTYVQAAKTFGASRWHLINWHILRNSLPPLIVQASLDIGSAILMAATLGFIGLGAQQPSAEWGAMVANGRNYVLDQWWYCAFPGAAILLTAVGFNLFGDGIRDLLDPKAGGKQS.

The Cytoplasmic portion of the chain corresponds to 1–33 (MMLSEETSAVRPQKQTRFNGAKLVWMLKGSPLT). Residues 34 to 54 (VTSAVIIVLMLLMMIFSPWLA) form a helical membrane-spanning segment. The Periplasmic segment spans residues 55 to 96 (THDPNAIDLTARLLPPSAAHWFGTDEVGRDLFSRVLVGSQQS). The chain crosses the membrane as a helical span at residues 97-117 (ILAGLVVVAIAGMIGSLLGCL). An ABC transmembrane type-1 domain is found at 97-282 (ILAGLVVVAI…LTAVGFNLFG (186 aa)). The Cytoplasmic portion of the chain corresponds to 118–124 (SGVLGGR). The next 2 membrane-spanning stretches (helical) occupy residues 125–145 (ADAI…LVLT) and 146–166 (MALA…IAIV). Over 167-217 (RIPFYVRLARGQALVVRQYTYVQAAKTFGASRWHLINWHILRNSLPPLIVQ) the chain is Cytoplasmic. The chain crosses the membrane as a helical span at residues 218 to 238 (ASLDIGSAILMAATLGFIGLG). Residues 239 to 260 (AQQPSAEWGAMVANGRNYVLDQ) are Periplasmic-facing. The chain crosses the membrane as a helical span at residues 261-281 (WWYCAFPGAAILLTAVGFNLF). Residues 282–298 (GDGIRDLLDPKAGGKQS) lie on the Cytoplasmic side of the membrane.

This sequence belongs to the binding-protein-dependent transport system permease family. OppBC subfamily. The complex is composed of two ATP-binding proteins (DdpD and DdpF), two transmembrane proteins (DdpB and DdpC) and a solute-binding protein (DdpA).

The protein resides in the cell inner membrane. In terms of biological role, part of the ABC transporter complex DdpABCDF, which is probably involved in D,D-dipeptide transport. Probably responsible for the translocation of the substrate across the membrane. This is Probable D,D-dipeptide transport system permease protein DdpC (ddpC) from Escherichia coli (strain K12).